An 809-amino-acid polypeptide reads, in one-letter code: Interleukin-4 receptor subunit alpha (809 aa).

Positions 1-25 are cleaved as a signal peptide; that stretch reads MGCLCPGLTLPVSCLILVWAAGSGS. The Extracellular portion of the chain corresponds to 26-231; the sequence is VKVLRLTACF…NYYEQPLEQR (206 aa). A disulfide bond links Cys34 and Cys44. N-linked (GlcNAc...) asparagine glycosylation is found at Asn53 and Asn71. Residues Cys74 and Cys86 are joined by a disulfide bond. N-linked (GlcNAc...) asparagine glycans are attached at residues Asn112, Asn128, and Asn161. A Fibronectin type-III domain is found at 125–222; the sequence is APQNLTVHAI…EWSPSTTWHN (98 aa). Ser163 is subject to Phosphoserine. N-linked (GlcNAc...) asparagine glycans are attached at residues Asn175 and Asn208. The WSXWS motif motif lies at 211–215; it reads WSEWS. The helical transmembrane segment at 232 to 255 threads the bilayer; it reads LPLGVSISCVVILAICLSCYFSII. Over 256 to 809 the chain is Cytoplasmic; sequence KIKKEWWDQI…STGPTCTSAS (554 aa). The short motif at 261–269 is the Box 1 motif element; it reads WWDQIPNPA. Disordered regions lie at residues 369–397 and 441–468; these read ESEE…QEGR and SAGP…TLTQ. The segment covering 447-468 has biased composition (polar residues); it reads AASQGEEQPLNPESNPLATLTQ. Tyr488 is subject to Phosphotyrosine. The disordered stretch occupies residues 514–536; the sequence is LGQVDPSIPSAPQPSEPPTALQP. Tyr566, Tyr590, and Tyr618 each carry phosphotyrosine. The segment at 606 to 674 is disordered; that stretch reads QSGVEASSGE…EPTVKGEDPR (69 aa). Residues 695-700 carry the ITIM motif motif; it reads IVYSAL.

It belongs to the type I cytokine receptor family. Type 4 subfamily. As to quaternary structure, the functional IL4 receptor is formed by initial binding of IL4 to IL4R. Subsequent recruitment to the complex of the common gamma chain, in immune cells, creates a type I receptor and, in non-immune cells, of IL13RA1 forms a type II receptor. IL4R can also interact with the IL13/IL13RA1 complex to form a similar type II receptor. Interacts with PIK3C3. Interacts with the SH2-containing phosphatases, PTPN6/SHIP1, PTPN11/SHIP2 and INPP5D/SHIP. Interacts with JAK1 through a Box 1-containing region; inhibited by SOCS5. Interacts with SOCS5; inhibits IL4 signaling. Interacts with JAK3. Interacts with CLM1. Interacts with IL13RA2. On IL4 binding, phosphorylated on tyrosine residues in the cytoplasmic domain.

Its subcellular location is the cell membrane. The protein localises to the secreted. Receptor for both interleukin 4 and interleukin 13. Couples to the JAK1/2/3-STAT6 pathway. The IL4 response is involved in promoting Th2 differentiation. The IL4/IL13 responses are involved in regulating IgE production and, chemokine and mucus production at sites of allergic inflammation. In certain cell types, can signal through activation of insulin receptor substrates, IRS1/IRS2. The sequence is that of Interleukin-4 receptor subunit alpha (IL4R) from Equus caballus (Horse).